Here is a 230-residue protein sequence, read N- to C-terminus: MTQLHQLISLLHLASPSLPIGGFSYSQGLEAAIDCGSVHDAASAERWIRDNLLHVQAQCEAPLWLLLHRCWKAGDAAQVRTWNDWFRATRETSELRLETEQMGWSLSRLIAQMEWGAPVLRETLAALSPVCLPTAFTAACVALQVEARDGLAAYCFNWAENQVAAAIKAVPLGQVAGQHMLRRLHCAVLDTVDEATRRADATPPQLSTFSPMLGLLSARHETQYSRLFRS.

The protein belongs to the UreF family. UreD, UreF and UreG form a complex that acts as a GTP-hydrolysis-dependent molecular chaperone, activating the urease apoprotein by helping to assemble the nickel containing metallocenter of UreC. The UreE protein probably delivers the nickel.

Its subcellular location is the cytoplasm. In terms of biological role, required for maturation of urease via the functional incorporation of the urease nickel metallocenter. This chain is Urease accessory protein UreF, found in Cupriavidus necator (strain ATCC 17699 / DSM 428 / KCTC 22496 / NCIMB 10442 / H16 / Stanier 337) (Ralstonia eutropha).